Here is an 81-residue protein sequence, read N- to C-terminus: Elicitor peptide 4 (81 aa).

Residues 1–54 constitute a propeptide that is removed on maturation; that stretch reads MERGVSYYLWIPFKFIHQTFGSLLLKLLGLRSPSDHSFPEDGEEEVKVVEVSSR. Positions 57–81 are disordered; the sequence is PGKKNVLKKSRESSGKPGGTNKKPF.

This sequence belongs to the brassicaceae elicitor peptide family.

Functionally, elicitor of plant defense. This Arabidopsis thaliana (Mouse-ear cress) protein is Elicitor peptide 4 (PEP4).